We begin with the raw amino-acid sequence, 671 residues long: DNA ligase (671 aa).

Residues 31-35 (DAEYD), 80-81 (SL), and E110 contribute to the NAD(+) site. K112 (N6-AMP-lysine intermediate) is an active-site residue. The NAD(+) site is built by R133, E167, K283, and K307. Zn(2+) contacts are provided by C401, C404, C419, and C424. A BRCT domain is found at 587–671 (EEELVFAGKT…YLPDEGGLNE (85 aa)).

The protein belongs to the NAD-dependent DNA ligase family. LigA subfamily. The cofactor is Mg(2+). Mn(2+) serves as cofactor.

It catalyses the reaction NAD(+) + (deoxyribonucleotide)n-3'-hydroxyl + 5'-phospho-(deoxyribonucleotide)m = (deoxyribonucleotide)n+m + AMP + beta-nicotinamide D-nucleotide.. Its function is as follows. DNA ligase that catalyzes the formation of phosphodiester linkages between 5'-phosphoryl and 3'-hydroxyl groups in double-stranded DNA using NAD as a coenzyme and as the energy source for the reaction. It is essential for DNA replication and repair of damaged DNA. The chain is DNA ligase from Listeria monocytogenes serotype 4a (strain HCC23).